The sequence spans 1343 residues: DNA-directed RNA polymerase subunit beta (1343 aa).

Belongs to the RNA polymerase beta chain family. The RNAP catalytic core consists of 2 alpha, 1 beta, 1 beta' and 1 omega subunit. When a sigma factor is associated with the core the holoenzyme is formed, which can initiate transcription.

The catalysed reaction is RNA(n) + a ribonucleoside 5'-triphosphate = RNA(n+1) + diphosphate. Functionally, DNA-dependent RNA polymerase catalyzes the transcription of DNA into RNA using the four ribonucleoside triphosphates as substrates. The protein is DNA-directed RNA polymerase subunit beta of Shewanella frigidimarina (strain NCIMB 400).